A 955-amino-acid chain; its full sequence is MDQKEVIGETGHKSVDLIKIMDKWQKKWTEAKIFEAEHDSRDKFFITAAFPYLNGVLHAGHLRTFTIPETIARYQRMKNKNVLWTFGFHVTGTPILGLANQIKERKEDIIWAYNNLHNIPMDELLKLNTPEAIVECFSKKATEAFKRMGFSLDWRRNFKTDDKVFSKFIEWQFYKLKEMGHITKGSHPVRYCPKCENPVEDHDLLHGEESTTVEYSLIKFTSKFDGKEIIMPMATLRPETVFGVTNAWVNPNEIYVMAEVHDEIQKLDSEDVDLKYNGIWIIGKECADKLKEQDRKIEILKEIKGSELLGLKIKNPVTKKEVPLLPADFVEMGIGTGCVMSVPAHAPYDYVALRDLGKVEEVGLIPLIEIEGYDKYPAKEIVEKLGIKDQNDEELLEQATSKIYKDEFHKGKLNENCGEYTGISVKDIKEKLTKDYINSNIAEIMYEFSEQKVVCRCGEKCIIKTVKGQWFINYSDENWKKLAHECIDNMNFAPEGIRQEFHNKVDWMKDKACARKRGLGTILPFDENWIIESLSDSTIYMAYYTIARFINEGLTPEQLIPELFDYVYLGNGNAEEIAKNSKIQAETIEEMRKEFLYYYPLDWRCSAKDLIPNHLTFMIFNHVALFGREHWPRGIEINGYVTIEGKKLSKSKGPVLPVSEVAENFGADVARFYITTCAELPQDADVKFKEMEKARDNLIKLYDLAVSVMEEESAEKELSLIDKWLLHKTYSSINSAETAYEEFQLRKIGLMFYELINDLRWYKRRGGENNSVLKEVVEIWTKLLSPVTPHLCEEIWEKLGYAGFISQEMYPVSKPELINEDLELGEEFIKSAMEDIRNIKGVAKINPEKMYLYTADDWKYDLLEFMNENAEKNVKALIPMVMKEDKFKRHGKEVMKLINEIMKIGVKKAIAEVEILENAKTFIESEFDCKVIVNGEDVKGKKKFAIPYKPAIYME.

A 'HIGH' region motif is present at residues 51–61 (PYLNGVLHAGH). Residues 647–651 (KLSKS) carry the 'KMSKS' region motif. Residue K650 participates in ATP binding.

The protein belongs to the class-I aminoacyl-tRNA synthetase family.

The protein resides in the cytoplasm. It catalyses the reaction tRNA(Leu) + L-leucine + ATP = L-leucyl-tRNA(Leu) + AMP + diphosphate. The chain is Leucine--tRNA ligase from Methanococcus maripaludis (strain DSM 14266 / JCM 13030 / NBRC 101832 / S2 / LL).